The following is a 1811-amino-acid chain: ADP-ribosylation factor guanine nucleotide-exchange factor sec71 (1811 aa).

2 disordered regions span residues 1 to 108 and 316 to 336; these read MTDL…TSEA and INMNKSSSNGTPDRANSPIPS. Basic and acidic residues-rich tracts occupy residues 33 to 49, 57 to 73, and 80 to 91; these read STIKSRVSDEIDEHDSI, KSIEINDKNLEAEKDIE, and PPEDDLDSRSIE. The residue at position 40 (Ser40) is a Phosphoserine. 2 stretches are compositionally biased toward polar residues: residues 92–108 and 316–326; these read SEQTGTLSKQTTSTSEA and INMNKSSSNGT. Thr326 carries the post-translational modification Phosphothreonine. Residues Ser332 and Ser353 each carry the phosphoserine modification. Positions 533–537 match the HUS box motif; that stretch reads NYDCI. A compositionally biased stretch (basic and acidic residues) spans 643 to 663; it reads TAKDDETESTSKGEEPQKSKS. The interval 643–688 is disordered; the sequence is TAKDDETESTSKGEEPQKSKSEPPSAGINSTSMDNLESSGQALATD. A compositionally biased stretch (polar residues) spans 669-688; that stretch reads GINSTSMDNLESSGQALATD. The SEC7 domain maps to 692-880; the sequence is QFENLKHRKK…TEVYEEIQKN (189 aa). Ser741 carries the phosphoserine modification. The residue at position 742 (Thr742) is a Phosphothreonine. Position 812 (Asp812) interacts with Mg(2+). The HDS1 domain stretch occupies residues 889–1103; the sequence is DPTSNFPEIP…TTKPLRKSLD (215 aa).

The protein localises to the cytoplasm. The protein resides in the golgi apparatus. It is found in the trans-Golgi network. It localises to the cytoplasmic vesicle. Its subcellular location is the COPI-coated vesicle membrane. The protein localises to the COPII-coated vesicle membrane. Functionally, guanine exchange factor that acts as an activator of arf1 at the trans-Golgi net-work and is thus involved in vesicular budding and traffic between compartments of the Golgi apparatus. Activation of Arf (ADP-ribosylation factor) GTPases is essential for vesicle formation via recruitment of cargo adapters and coat proteins necessary for Golgi trafficking. Involved in tunicamycin-induced ER stress response and subsequent apoptosis. The polypeptide is ADP-ribosylation factor guanine nucleotide-exchange factor sec71 (Schizosaccharomyces pombe (strain 972 / ATCC 24843) (Fission yeast)).